Consider the following 248-residue polypeptide: NADP-dependent 3-hydroxy acid dehydrogenase YdfG (248 aa).

Residues Gly-7–Phe-12, Arg-32–Arg-33, Asp-54–Val-55, and Asn-81 each bind NADP(+). Ser-134 contributes to the substrate binding site. Residues Tyr-147, Lys-151, and Pro-177 to Phe-185 contribute to the NADP(+) site. The active-site Proton acceptor is Tyr-147.

It belongs to the short-chain dehydrogenases/reductases (SDR) family. As to quaternary structure, homotetramer.

The enzyme catalyses 3-hydroxypropanoate + NADP(+) = 3-oxopropanoate + NADPH + H(+). The catalysed reaction is L-allo-threonine + NADP(+) = aminoacetone + CO2 + NADPH. In terms of biological role, NADP-dependent dehydrogenase with broad substrate specificity acting on 3-hydroxy acids. Catalyzes the NADP-dependent oxidation of L-allo-threonine to L-2-amino-3-keto-butyrate, which is spontaneously decarboxylated into aminoacetone. Also acts on D-threonine, L-serine, D-serine, D-3-hydroxyisobutyrate, L-3-hydroxyisobutyrate, D-glycerate and L-glycerate. Able to catalyze the reduction of the malonic semialdehyde to 3-hydroxypropionic acid. YdfG is apparently supplementing RutE, the presumed malonic semialdehyde reductase involved in pyrimidine degradation since both are able to detoxify malonic semialdehyde. The polypeptide is NADP-dependent 3-hydroxy acid dehydrogenase YdfG (Escherichia coli O6:H1 (strain CFT073 / ATCC 700928 / UPEC)).